A 372-amino-acid chain; its full sequence is tRNA-specific 2-thiouridylase MnmA (372 aa).

Residues 11–18 and methionine 37 each bind ATP; that span reads GMSGGVDS. The segment at 97-99 is interaction with target base in tRNA; that stretch reads NPD. Residue cysteine 102 is the Nucleophile of the active site. The cysteines at positions 102 and 199 are disulfide-linked. Glycine 126 serves as a coordination point for ATP. The segment at 149 to 151 is interaction with tRNA; that stretch reads KDQ. The Cysteine persulfide intermediate role is filled by cysteine 199. Residues 309-310 form an interaction with tRNA region; sequence RY.

This sequence belongs to the MnmA/TRMU family.

The protein resides in the cytoplasm. It catalyses the reaction S-sulfanyl-L-cysteinyl-[protein] + uridine(34) in tRNA + AH2 + ATP = 2-thiouridine(34) in tRNA + L-cysteinyl-[protein] + A + AMP + diphosphate + H(+). In terms of biological role, catalyzes the 2-thiolation of uridine at the wobble position (U34) of tRNA, leading to the formation of s(2)U34. The polypeptide is tRNA-specific 2-thiouridylase MnmA (Staphylococcus epidermidis (strain ATCC 35984 / DSM 28319 / BCRC 17069 / CCUG 31568 / BM 3577 / RP62A)).